Here is a 213-residue protein sequence, read N- to C-terminus: Uridine kinase (213 aa).

Residue 15-22 (GASASGKS) coordinates ATP.

This sequence belongs to the uridine kinase family.

The protein localises to the cytoplasm. It carries out the reaction uridine + ATP = UMP + ADP + H(+). The catalysed reaction is cytidine + ATP = CMP + ADP + H(+). It functions in the pathway pyrimidine metabolism; CTP biosynthesis via salvage pathway; CTP from cytidine: step 1/3. The protein operates within pyrimidine metabolism; UMP biosynthesis via salvage pathway; UMP from uridine: step 1/1. This Proteus mirabilis (strain HI4320) protein is Uridine kinase.